The primary structure comprises 109 residues: Ig kappa chain V region S211 (109 aa).

The framework-1 stretch occupies residues 1-23; sequence DVQMTQSPSYLAASPGESVSISC. Positions 24–35 are complementarity-determining-1; the sequence is KASNKSISNNLA. The tract at residues 36 to 50 is framework-2; that stretch reads WYZZKPGKANKLLIS. Residues 51-57 form a complementarity-determining-2 region; that stretch reads SGSTLQS. The framework-3 stretch occupies residues 58–89; it reads GTPSRFSGSGSDTDFTLTIRSLEFQDFAVYYC. A complementarity-determining-3 region spans residues 90–98; it reads ZZYNEPYYT. Residues 99 to 108 are framework-4; the sequence is FGAGTMLELK.

The protein is Ig kappa chain V region S211 of Rattus norvegicus (Rat).